Consider the following 156-residue polypeptide: Ribosomal RNA large subunit methyltransferase H (156 aa).

S-adenosyl-L-methionine contacts are provided by residues Leu-73, Gly-104, and Leu-123–Leu-128.

The protein belongs to the RNA methyltransferase RlmH family. Homodimer.

The protein resides in the cytoplasm. The catalysed reaction is pseudouridine(1915) in 23S rRNA + S-adenosyl-L-methionine = N(3)-methylpseudouridine(1915) in 23S rRNA + S-adenosyl-L-homocysteine + H(+). In terms of biological role, specifically methylates the pseudouridine at position 1915 (m3Psi1915) in 23S rRNA. The sequence is that of Ribosomal RNA large subunit methyltransferase H from Idiomarina loihiensis (strain ATCC BAA-735 / DSM 15497 / L2-TR).